A 705-amino-acid polypeptide reads, in one-letter code: Ribosomal RNA large subunit methyltransferase K/L (705 aa).

The THUMP domain maps to 42–154 (LAQKVCLSTR…RYGVSMYIDY (113 aa)).

The protein belongs to the methyltransferase superfamily. RlmKL family.

Its subcellular location is the cytoplasm. The enzyme catalyses guanosine(2445) in 23S rRNA + S-adenosyl-L-methionine = N(2)-methylguanosine(2445) in 23S rRNA + S-adenosyl-L-homocysteine + H(+). It catalyses the reaction guanosine(2069) in 23S rRNA + S-adenosyl-L-methionine = N(2)-methylguanosine(2069) in 23S rRNA + S-adenosyl-L-homocysteine + H(+). Functionally, specifically methylates the guanine in position 2445 (m2G2445) and the guanine in position 2069 (m7G2069) of 23S rRNA. This Pseudoalteromonas translucida (strain TAC 125) protein is Ribosomal RNA large subunit methyltransferase K/L.